The primary structure comprises 156 residues: Protein-export protein SecB (156 aa).

It belongs to the SecB family. In terms of assembly, homotetramer, a dimer of dimers. One homotetramer interacts with 1 SecA dimer.

It is found in the cytoplasm. Its function is as follows. One of the proteins required for the normal export of preproteins out of the cell cytoplasm. It is a molecular chaperone that binds to a subset of precursor proteins, maintaining them in a translocation-competent state. It also specifically binds to its receptor SecA. This is Protein-export protein SecB from Pectobacterium carotovorum subsp. carotovorum (strain PC1).